Consider the following 340-residue polypeptide: Phosphoribosylformylglycinamidine cyclo-ligase (340 aa).

Belongs to the AIR synthase family.

The protein resides in the cytoplasm. The enzyme catalyses 2-formamido-N(1)-(5-O-phospho-beta-D-ribosyl)acetamidine + ATP = 5-amino-1-(5-phospho-beta-D-ribosyl)imidazole + ADP + phosphate + H(+). Its pathway is purine metabolism; IMP biosynthesis via de novo pathway; 5-amino-1-(5-phospho-D-ribosyl)imidazole from N(2)-formyl-N(1)-(5-phospho-D-ribosyl)glycinamide: step 2/2. This Streptococcus agalactiae serotype V (strain ATCC BAA-611 / 2603 V/R) protein is Phosphoribosylformylglycinamidine cyclo-ligase.